Consider the following 243-residue polypeptide: Phosphoribosylaminoimidazole-succinocarboxamide synthase (243 aa).

It belongs to the SAICAR synthetase family.

It catalyses the reaction 5-amino-1-(5-phospho-D-ribosyl)imidazole-4-carboxylate + L-aspartate + ATP = (2S)-2-[5-amino-1-(5-phospho-beta-D-ribosyl)imidazole-4-carboxamido]succinate + ADP + phosphate + 2 H(+). It participates in purine metabolism; IMP biosynthesis via de novo pathway; 5-amino-1-(5-phospho-D-ribosyl)imidazole-4-carboxamide from 5-amino-1-(5-phospho-D-ribosyl)imidazole-4-carboxylate: step 1/2. The chain is Phosphoribosylaminoimidazole-succinocarboxamide synthase from Methanobrevibacter smithii (strain ATCC 35061 / DSM 861 / OCM 144 / PS).